We begin with the raw amino-acid sequence, 810 residues long: Volume-regulated anion channel subunit LRRC8A (810 aa).

Residue Met-1 is modified to N-acetylmethionine. The Cytoplasmic portion of the chain corresponds to 1-23 (MIPVTELRYFADTQPAYRILKPW). Residues 24-47 (WDVFTDYISIVMLMIAVFGGTLQV) traverse the membrane as a helical segment. Residues 48-123 (TQDKMICLPC…YENRLHWFAK (76 aa)) are Extracellular-facing. Cystine bridges form between Cys-54-Cys-310, Cys-57-Cys-65, and Cys-113-Cys-295. Asn-66 and Asn-83 each carry an N-linked (GlcNAc...) asparagine glycan. The helical transmembrane segment at 124 to 142 (YFPYLVLLHTLIFLACSNF) threads the bilayer. Over 143–264 (WFKFPRTSSK…EEGDIVYRLY (122 aa)) the chain is Cytoplasmic. Thr-200 carries the phosphothreonine modification. Position 202 is a phosphoserine (Ser-202). Thr-215 is subject to Phosphothreonine. The residue at position 217 (Ser-217) is a Phosphoserine. The chain crosses the membrane as a helical span at residues 265 to 286 (MRQTIIKVIKFILIICYTVYYV). Residues 287-316 (HNIKFDVDCTVDIESLTGYRTYRCAHPLAT) lie on the Extracellular side of the membrane. A helical transmembrane segment spans residues 317-341 (LFKILASFYISLVIFYGLICMYTLW). Residues 342–810 (WMLRRSLKKY…RLWRADKEQA (469 aa)) are Cytoplasmic-facing. 17 LRR repeats span residues 399 to 422 (ENKL…RLTK), 423 to 445 (NAQD…VFDL), 447 to 468 (ELEV…IAQL), 469 to 492 (TGLK…AFLR), 493 to 515 (ENLR…IYSL), 518 to 542 (LEEL…GLRE), 543 to 565 (LKRL…VTDV), 567 to 589 (VHLQ…SLKK), 590 to 613 (MANL…IFSL), 615 to 637 (NLQE…SFQH), 639 to 661 (HRLT…IGNL), 662 to 684 (TNLE…LFYC), 686 to 707 (KLRY…IGLL), 708 to 730 (QNLQ…LFQC), 732 to 753 (KLRA…VGEL), 754 to 776 (TNLT…LGEC), and 778 to 801 (LLKR…VKER). The short motif at 706–707 (LL) is the Di-leucine motif element.

It belongs to the LRRC8 family. In terms of assembly, heterohexamer; oligomerizes with other LRRC8 proteins (LRRC8B, LRRC8C, LRRC8D and/or LRRC8E) to form a heterohexamer. Can form homohexamers in vitro, but these have lower conductance than heterohexamers. In vivo, the subunit composition may depend primarily on expression levels, and heterooligomeric channels containing various proportions of the different LRRC8 proteins may coexist. Interact with GRB2. Interacts with NOX4; this interaction prevents the ubiquitin-mediated degradation of LRRC8A. N-glycosylated. Expressed in brain, kidney, ovary, lung, liver, heart, and fetal brain and liver. Found at high levels in bone marrow; lower levels are detected in peripheral blood cells. Expressed on T-cells as well as on B-lineage cells.

It is found in the cell membrane. The protein localises to the lysosome membrane. It carries out the reaction chloride(in) = chloride(out). The catalysed reaction is iodide(out) = iodide(in). The enzyme catalyses taurine(out) = taurine(in). It catalyses the reaction L-aspartate(out) = L-aspartate(in). It carries out the reaction L-glutamate(out) = L-glutamate(in). The catalysed reaction is myo-inositol(out) = myo-inositol(in). The enzyme catalyses 2',3'-cGAMP(out) = 2',3'-cGAMP(in). With respect to regulation, inhibited by (4-[(2-butyl-6,7-dichloro-2-cyclopentyl-2,3-dihydro-1-oxo-1H-inden-5-yl)oxy]butanoic acid), which plugs the channel like a cork in a bottle by binding in the extracellular selectivity filter and sterically occluding ion conduction. Lipids may block conduction in closed heterohexameric channels. Its function is as follows. Essential component of the volume-regulated anion channel (VRAC, also named VSOAC channel), an anion channel required to maintain a constant cell volume in response to extracellular or intracellular osmotic changes. The VRAC channel conducts iodide better than chloride and can also conduct organic osmolytes like taurine. Mediates efflux of amino acids, such as aspartate and glutamate, in response to osmotic stress. LRRC8A and LRRC8D are required for the uptake of the drug cisplatin. In complex with LRRC8C or LRRC8E, acts as a transporter of immunoreactive cyclic dinucleotide GMP-AMP (2'-3'-cGAMP), an immune messenger produced in response to DNA virus in the cytosol: mediates both import and export of 2'-3'-cGAMP, thereby promoting transfer of 2'-3'-cGAMP to bystander cells. In contrast, complexes containing LRRC8D inhibit transport of 2'-3'-cGAMP. Required for in vivo channel activity, together with at least one other family member (LRRC8B, LRRC8C, LRRC8D or LRRC8E); channel characteristics depend on the precise subunit composition. Can form functional channels by itself (in vitro). Involved in B-cell development: required for the pro-B cell to pre-B cell transition. Also required for T-cell development. Required for myoblast differentiation: VRAC activity promotes membrane hyperpolarization and regulates insulin-stimulated glucose metabolism and oxygen consumption. Also acts as a regulator of glucose-sensing in pancreatic beta cells: VRAC currents, generated in response to hypotonicity- or glucose-induced beta cell swelling, depolarize cells, thereby causing electrical excitation, leading to increase glucose sensitivity and insulin secretion. Also plays a role in lysosome homeostasis by forming functional lysosomal VRAC channels in response to low cytoplasmic ionic strength condition: lysosomal VRAC channels are necessary for the formation of large lysosome-derived vacuoles, which store and then expel excess water to maintain cytosolic water homeostasis. Acts as a key factor in NLRP3 inflammasome activation by modulating itaconate efflux and mitochondria function. The sequence is that of Volume-regulated anion channel subunit LRRC8A from Homo sapiens (Human).